Here is a 415-residue protein sequence, read N- to C-terminus: Serine/threonine transporter SstT (415 aa).

8 consecutive transmembrane segments (helical) span residues 15-35 (GSLV…AWLA), 45-65 (LGTL…WILV), 85-105 (ILYI…SFIF), 142-162 (ALLN…GIAL), 193-213 (VGIF…ALLG), 217-237 (LLVV…PLIV), 301-321 (GAAV…GIPV), and 331-351 (VVSA…LLLI).

This sequence belongs to the dicarboxylate/amino acid:cation symporter (DAACS) (TC 2.A.23) family.

The protein resides in the cell inner membrane. It catalyses the reaction L-serine(in) + Na(+)(in) = L-serine(out) + Na(+)(out). The enzyme catalyses L-threonine(in) + Na(+)(in) = L-threonine(out) + Na(+)(out). In terms of biological role, involved in the import of serine and threonine into the cell, with the concomitant import of sodium (symport system). The polypeptide is Serine/threonine transporter SstT (Photorhabdus laumondii subsp. laumondii (strain DSM 15139 / CIP 105565 / TT01) (Photorhabdus luminescens subsp. laumondii)).